The chain runs to 340 residues: Mitochondrial import receptor subunit TOM40 homolog 2 (340 aa).

Residues 1-37 form a disordered region; sequence MGNVMASTADAESSRGRGHLSAGLRLPEAPQYSGGVP.

The protein belongs to the Tom40 family. As to quaternary structure, forms part of the preprotein translocase of the outer mitochondrial membrane (TOM complex). Interacts with mitochondrial targeting sequences. Only expressed in the male germline, detected in primary spermatocytes as well as post-meiotic stages. Not detected in stem cells and spermatogonia near the tip of the testis.

The protein localises to the mitochondrion outer membrane. Its function is as follows. Channel-forming protein essential for import of protein precursors into mitochondria. In Drosophila melanogaster (Fruit fly), this protein is Mitochondrial import receptor subunit TOM40 homolog 2.